Here is a 376-residue protein sequence, read N- to C-terminus: Growth/differentiation factor 8 (376 aa).

Positions 1-22 (MHLSQIVLYLSLLIALGPVVLS) are cleaved as a signal peptide. Residues 23 to 267 (DQEAHQQPSV…ISEGPRRARR (245 aa)) constitute a propeptide that is removed on maturation. Cystine bridges form between C273–C283, C282–C341, C310–C373, and C314–C375.

This sequence belongs to the TGF-beta family. In terms of assembly, homodimer; disulfide-linked. In terms of tissue distribution, highly expressed in muscle. Also expressed in other tissues such as eye, gill, ovary, gut and brain. Very low level detected in testis. Not expressed in liver, kidney, stomach or heart.

Its subcellular location is the secreted. In terms of biological role, acts specifically as a negative regulator of skeletal muscle growth. The protein is Growth/differentiation factor 8 of Oreochromis mossambicus (Mozambique tilapia).